The following is a 350-amino-acid chain: Dihydroorotate dehydrogenase (quinone) (350 aa).

FMN-binding positions include 67-71 and glycine 91; that span reads AGFDK. Substrate is bound at residue lysine 71. 116-120 is a substrate binding site; that stretch reads NRMGL. The FMN site is built by asparagine 144 and asparagine 177. Residue asparagine 177 participates in substrate binding. Residue cysteine 180 is the Nucleophile of the active site. Asparagine 182 serves as a coordination point for substrate. FMN contacts are provided by lysine 213 and threonine 241. Residue 242–243 coordinates substrate; that stretch reads NT. The tract at residues 245–265 is disordered; it reads TERPASLRSPNAVETGGLSGK. FMN-binding positions include glycine 264, glycine 291, and 312 to 313; that span reads YT.

It belongs to the dihydroorotate dehydrogenase family. Type 2 subfamily. Monomer. FMN serves as cofactor.

The protein localises to the cell membrane. The enzyme catalyses (S)-dihydroorotate + a quinone = orotate + a quinol. The protein operates within pyrimidine metabolism; UMP biosynthesis via de novo pathway; orotate from (S)-dihydroorotate (quinone route): step 1/1. Its function is as follows. Catalyzes the conversion of dihydroorotate to orotate with quinone as electron acceptor. This chain is Dihydroorotate dehydrogenase (quinone) (pyrD), found in Haloarcula marismortui (strain ATCC 43049 / DSM 3752 / JCM 8966 / VKM B-1809) (Halobacterium marismortui).